The sequence spans 641 residues: Sodium-dependent nutrient amino acid transporter 1 (641 aa).

Residues 1–36 (MELKGVQPSNGSANGNGTTNAASTEKTDAEKHTPER) are disordered. The Cytoplasmic portion of the chain corresponds to 1-38 (MELKGVQPSNGSANGNGTTNAASTEKTDAEKHTPERTN). Residues 9-24 (SNGSANGNGTTNAAST) are compositionally biased toward low complexity. Residues 25 to 35 (EKTDAEKHTPE) are compositionally biased toward basic and acidic residues. Helical transmembrane passes span 39 to 59 (WGNGLEFLMSCISVSVGLGNV), 72 to 92 (GAFLIPYIIVLFLIGKPMYYL), and 109 to 129 (SVVPGFVGVGYGQAFGTICII). Residues asparagine 183 and asparagine 188 are each glycosylated (N-linked (GlcNAc...) asparagine). Transmembrane regions (helical) follow at residues 229–249 (PDWKLTLALLAAWVVIFLVIM), 258–278 (AAYFLALFPYVVLFVLLIRAV), 307–327 (AVVQCFFSLAVGSGPIIMFAS), 341–361 (IVTTLDTLTSLLGGITIFAIL), 401–421 (LFSVLFFFMLFVLGIGSIVAL), 441–461 (VALITSACGFLMGLVYVTPGG), 474–494 (TYVVFILAIFELAGIVWVYGL), 516–536 (CWSFFTPVMMIIIFIYSMVTI), and 552–572 (IAGWLLFAIGAAQFPLWGLWY).

Belongs to the sodium:neurotransmitter symporter (SNF) (TC 2.A.22) family.

The protein localises to the membrane. Functionally, unusual broad substrate spectrum amino acid:sodium cotransporter that promotes absorption of the D isomers of essential amino acids. Neutral amino acids are the preferred substrates, especially methionine and phenylalanine. The sequence is that of Sodium-dependent nutrient amino acid transporter 1 from Drosophila erecta (Fruit fly).